We begin with the raw amino-acid sequence, 210 residues long: Uracil phosphoribosyltransferase (210 aa).

5-phospho-alpha-D-ribose 1-diphosphate contacts are provided by residues R78, R103, and 130–138; that span reads DPMLATGGS. Uracil-binding positions include I195 and 200 to 202; that span reads GDA. D201 is a binding site for 5-phospho-alpha-D-ribose 1-diphosphate.

It belongs to the UPRTase family. Requires Mg(2+) as cofactor.

It carries out the reaction UMP + diphosphate = 5-phospho-alpha-D-ribose 1-diphosphate + uracil. It participates in pyrimidine metabolism; UMP biosynthesis via salvage pathway; UMP from uracil: step 1/1. Its activity is regulated as follows. Allosterically activated by GTP. Catalyzes the conversion of uracil and 5-phospho-alpha-D-ribose 1-diphosphate (PRPP) to UMP and diphosphate. The polypeptide is Uracil phosphoribosyltransferase (Leifsonia xyli subsp. xyli (strain CTCB07)).